The following is a 376-amino-acid chain: 4-hydroxy-3-methylbut-2-en-1-yl diphosphate synthase (flavodoxin) (376 aa).

The [4Fe-4S] cluster site is built by Cys270, Cys273, Cys305, and Glu312.

Belongs to the IspG family. The cofactor is [4Fe-4S] cluster.

The catalysed reaction is (2E)-4-hydroxy-3-methylbut-2-enyl diphosphate + oxidized [flavodoxin] + H2O + 2 H(+) = 2-C-methyl-D-erythritol 2,4-cyclic diphosphate + reduced [flavodoxin]. It functions in the pathway isoprenoid biosynthesis; isopentenyl diphosphate biosynthesis via DXP pathway; isopentenyl diphosphate from 1-deoxy-D-xylulose 5-phosphate: step 5/6. Converts 2C-methyl-D-erythritol 2,4-cyclodiphosphate (ME-2,4cPP) into 1-hydroxy-2-methyl-2-(E)-butenyl 4-diphosphate. This is 4-hydroxy-3-methylbut-2-en-1-yl diphosphate synthase (flavodoxin) from Colwellia psychrerythraea (strain 34H / ATCC BAA-681) (Vibrio psychroerythus).